A 512-amino-acid polypeptide reads, in one-letter code: Eukaryotic translation initiation factor 3 subunit L (512 aa).

Residues 291–477 (DAFRLFESIL…GERQFTDSVD (187 aa)) form the PCI domain.

Belongs to the eIF-3 subunit L family. As to quaternary structure, component of the eukaryotic translation initiation factor 3 (eIF-3) complex.

It localises to the cytoplasm. In terms of biological role, component of the eukaryotic translation initiation factor 3 (eIF-3) complex, which is involved in protein synthesis of a specialized repertoire of mRNAs and, together with other initiation factors, stimulates binding of mRNA and methionyl-tRNAi to the 40S ribosome. The eIF-3 complex specifically targets and initiates translation of a subset of mRNAs involved in cell proliferation. In Monosiga brevicollis (Choanoflagellate), this protein is Eukaryotic translation initiation factor 3 subunit L.